The following is a 117-amino-acid chain: Large ribosomal subunit protein bL20 (117 aa).

This sequence belongs to the bacterial ribosomal protein bL20 family.

Binds directly to 23S ribosomal RNA and is necessary for the in vitro assembly process of the 50S ribosomal subunit. It is not involved in the protein synthesizing functions of that subunit. The protein is Large ribosomal subunit protein bL20 of Rickettsia massiliae (strain Mtu5).